The chain runs to 188 residues: Small ribosomal subunit protein uS7 (188 aa).

Belongs to the universal ribosomal protein uS7 family. As to quaternary structure, part of the 30S ribosomal subunit.

Functionally, one of the primary rRNA binding proteins, it binds directly to 16S rRNA where it nucleates assembly of the head domain of the 30S subunit. Is located at the subunit interface close to the decoding center. The protein is Small ribosomal subunit protein uS7 of Methanococcus maripaludis (strain DSM 14266 / JCM 13030 / NBRC 101832 / S2 / LL).